Consider the following 462-residue polypeptide: MQQRIKDILHQGQVGDRITVKGWVRTKRELKECTFVNLNDGSTLAGLQVVIPNTVAAATPTMKDLTTGAAAEFTGELVRSPGKNQAIELHAEEIHLWGTADPETYPLQKKRHSFEFLRTIAHLRPRTNTLGAVMRVRNACATAIHQFFQERGFLWVHTPIITASDCEGAGELFTVTTLDLTQPPKTPEGKIDFSQDFFGRRAYLTVSGQLEAEIMATAFTNVYTFGPTFRAENSNTSRHLAEFWMVEPEMAFCDLRGDMELAEAFLQFVFRYVLDHCPEDMAFFQERIDHSVMATAEQMATQPFAHLSYSEAIQVLEKSGRAFEFPVAWGLDLQSEHERYLAEEYCQRPVIVYDYPAAIKAFYMRLNDDGKTVAAMDILAPKIGEIIGGSQREERFDVLQERIVTQGLDPAPYWWYLDLRRYGSVPHAGFGLGFERLVQFMTGMDNIRDVIPFPRTPGNAEF.

This sequence belongs to the class-II aminoacyl-tRNA synthetase family. Homodimer.

It localises to the cytoplasm. The enzyme catalyses tRNA(Asn) + L-asparagine + ATP = L-asparaginyl-tRNA(Asn) + AMP + diphosphate + H(+). The sequence is that of Asparagine--tRNA ligase from Thermosynechococcus vestitus (strain NIES-2133 / IAM M-273 / BP-1).